The following is a 408-amino-acid chain: Large ribosomal subunit protein uL4 (408 aa).

A disordered region spans residues 58 to 98 (PYAVSKKAGHQTSAESWGTGRAVSRIPRVPGGGTHRAGQGA).

The protein belongs to the universal ribosomal protein uL4 family.

This chain is Large ribosomal subunit protein uL4 (RPL4), found in Prunus armeniaca (Apricot).